Consider the following 331-residue polypeptide: Tetraacyldisaccharide 4'-kinase (331 aa).

An ATP-binding site is contributed by 58–65 (TVGGSGKT).

It belongs to the LpxK family.

It catalyses the reaction a lipid A disaccharide + ATP = a lipid IVA + ADP + H(+). The protein operates within glycolipid biosynthesis; lipid IV(A) biosynthesis; lipid IV(A) from (3R)-3-hydroxytetradecanoyl-[acyl-carrier-protein] and UDP-N-acetyl-alpha-D-glucosamine: step 6/6. Transfers the gamma-phosphate of ATP to the 4'-position of a tetraacyldisaccharide 1-phosphate intermediate (termed DS-1-P) to form tetraacyldisaccharide 1,4'-bis-phosphate (lipid IVA). This Shewanella denitrificans (strain OS217 / ATCC BAA-1090 / DSM 15013) protein is Tetraacyldisaccharide 4'-kinase.